An 876-amino-acid polypeptide reads, in one-letter code: Leucine--tRNA ligase (876 aa).

Residues 43–53 (PYPSGRIHMGH) carry the 'HIGH' region motif. A 'KMSKS' region motif is present at residues 632 to 636 (KMSKS). ATP is bound at residue Lys635.

The protein belongs to the class-I aminoacyl-tRNA synthetase family.

It is found in the cytoplasm. It catalyses the reaction tRNA(Leu) + L-leucine + ATP = L-leucyl-tRNA(Leu) + AMP + diphosphate. The chain is Leucine--tRNA ligase from Rhodopseudomonas palustris (strain ATCC BAA-98 / CGA009).